We begin with the raw amino-acid sequence, 392 residues long: Enoyl-[acyl-carrier-protein] reductase [NADH] (392 aa).

Residues 46-51 (GSSSGY), 72-73 (LE), 108-109 (DA), and 136-137 (VA) each bind NAD(+). Tyrosine 225 provides a ligand contact to substrate. Catalysis depends on tyrosine 235, which acts as the Proton donor. NAD(+) is bound by residues lysine 244 and 273–275 (LVT).

Belongs to the TER reductase family. As to quaternary structure, monomer.

It carries out the reaction a 2,3-saturated acyl-[ACP] + NAD(+) = a (2E)-enoyl-[ACP] + NADH + H(+). It functions in the pathway lipid metabolism; fatty acid biosynthesis. Functionally, involved in the final reduction of the elongation cycle of fatty acid synthesis (FAS II). Catalyzes the reduction of a carbon-carbon double bond in an enoyl moiety that is covalently linked to an acyl carrier protein (ACP). In Streptomyces avermitilis (strain ATCC 31267 / DSM 46492 / JCM 5070 / NBRC 14893 / NCIMB 12804 / NRRL 8165 / MA-4680), this protein is Enoyl-[acyl-carrier-protein] reductase [NADH].